A 490-amino-acid polypeptide reads, in one-letter code: Glutamate--tRNA ligase 2 (490 aa).

The 'HIGH' region signature appears at 33–43; the sequence is PSPTGYLHIGG. The 'KMSKS' region motif lies at 262-266; that stretch reads KLSKR. Lysine 265 contributes to the ATP binding site.

This sequence belongs to the class-I aminoacyl-tRNA synthetase family. Glutamate--tRNA ligase type 1 subfamily. Monomer.

Its subcellular location is the cytoplasm. The catalysed reaction is tRNA(Glu) + L-glutamate + ATP = L-glutamyl-tRNA(Glu) + AMP + diphosphate. In terms of biological role, catalyzes the attachment of glutamate to tRNA(Glu) in a two-step reaction: glutamate is first activated by ATP to form Glu-AMP and then transferred to the acceptor end of tRNA(Glu). The protein is Glutamate--tRNA ligase 2 of Parvibaculum lavamentivorans (strain DS-1 / DSM 13023 / NCIMB 13966).